A 644-amino-acid chain; its full sequence is ATP-dependent zinc metalloprotease FtsH (644 aa).

Over 1-4 (MAKN) the chain is Cytoplasmic. The helical transmembrane segment at 5–25 (LILWLVIAVVLMSVFQSFGPS) threads the bilayer. The Periplasmic segment spans residues 26–98 (ESNGRKVDYS…VGEPPEEPSL (73 aa)). The helical transmembrane segment at 99–119 (LASIFISWFPMLLLIGVWIFF) threads the bilayer. Residues 120-644 (MRQMQGGGGK…NTMSEQLGDK (525 aa)) are Cytoplasmic-facing. Residue 192–199 (GPPGTGKT) coordinates ATP. H414 provides a ligand contact to Zn(2+). E415 is an active-site residue. Positions 418 and 492 each coordinate Zn(2+). The disordered stretch occupies residues 599–644 (RPPAGWEDPNGTNNSDSNGTPQAPRPVDEPRTPNPGNTMSEQLGDK). Polar residues-rich tracts occupy residues 608–619 (NGTNNSDSNGTP) and 632–644 (NPGNTMSEQLGDK).

The protein in the central section; belongs to the AAA ATPase family. In the C-terminal section; belongs to the peptidase M41 family. As to quaternary structure, homohexamer. It depends on Zn(2+) as a cofactor.

The protein resides in the cell inner membrane. Its function is as follows. Acts as a processive, ATP-dependent zinc metallopeptidase for both cytoplasmic and membrane proteins. Plays a role in the quality control of integral membrane proteins. This is ATP-dependent zinc metalloprotease FtsH from Salmonella typhi.